The following is a 360-amino-acid chain: Histidinol-phosphate aminotransferase (360 aa).

N6-(pyridoxal phosphate)lysine is present on K222.

Belongs to the class-II pyridoxal-phosphate-dependent aminotransferase family. Histidinol-phosphate aminotransferase subfamily. Homodimer. It depends on pyridoxal 5'-phosphate as a cofactor.

It catalyses the reaction L-histidinol phosphate + 2-oxoglutarate = 3-(imidazol-4-yl)-2-oxopropyl phosphate + L-glutamate. It functions in the pathway amino-acid biosynthesis; L-histidine biosynthesis; L-histidine from 5-phospho-alpha-D-ribose 1-diphosphate: step 7/9. This chain is Histidinol-phosphate aminotransferase, found in Listeria innocua serovar 6a (strain ATCC BAA-680 / CLIP 11262).